We begin with the raw amino-acid sequence, 465 residues long: Glutamate--tRNA ligase (465 aa).

The 'HIGH' region motif lies at 11–21 (PSPTGFIHLGN). Residues 118 to 139 (GEKPRYDGTWRPAPGKILPPPP) are disordered. The 'KMSKS' region signature appears at 243 to 247 (KMSKR). ATP is bound at residue Lys246.

The protein belongs to the class-I aminoacyl-tRNA synthetase family. Glutamate--tRNA ligase type 1 subfamily. In terms of assembly, monomer.

It is found in the cytoplasm. The catalysed reaction is tRNA(Glu) + L-glutamate + ATP = L-glutamyl-tRNA(Glu) + AMP + diphosphate. In terms of biological role, catalyzes the attachment of glutamate to tRNA(Glu) in a two-step reaction: glutamate is first activated by ATP to form Glu-AMP and then transferred to the acceptor end of tRNA(Glu). The polypeptide is Glutamate--tRNA ligase (Ralstonia pickettii (strain 12J)).